The primary structure comprises 272 residues: F-box protein PP2-B10 (272 aa).

In terms of domain architecture, F-box spans 11 to 57 (SSPFDSFPEDCISYIISFTNPRDACVAATVSKTFESTVKSDIIWEKF).

As to quaternary structure, part of a SCF (ASK-cullin-F-box) protein ligase complex. Interacts with SKP1B/ASK2, ASK11 and ASK12.

Its pathway is protein modification; protein ubiquitination. Component of SCF(ASK-cullin-F-box) E3 ubiquitin ligase complexes, which may mediate the ubiquitination and subsequent proteasomal degradation of target proteins. This chain is F-box protein PP2-B10 (PP2B10), found in Arabidopsis thaliana (Mouse-ear cress).